The sequence spans 354 residues: Protein RecA (354 aa).

Residue 65–72 (GPESSGKT) participates in ATP binding.

It belongs to the RecA family.

Its subcellular location is the cytoplasm. Its function is as follows. Can catalyze the hydrolysis of ATP in the presence of single-stranded DNA, the ATP-dependent uptake of single-stranded DNA by duplex DNA, and the ATP-dependent hybridization of homologous single-stranded DNAs. It interacts with LexA causing its activation and leading to its autocatalytic cleavage. This chain is Protein RecA, found in Pseudomonas syringae pv. syringae (strain B728a).